The following is a 213-amino-acid chain: 3-isopropylmalate dehydratase small subunit (213 aa).

It belongs to the LeuD family. LeuD type 1 subfamily. As to quaternary structure, heterodimer of LeuC and LeuD.

The catalysed reaction is (2R,3S)-3-isopropylmalate = (2S)-2-isopropylmalate. The protein operates within amino-acid biosynthesis; L-leucine biosynthesis; L-leucine from 3-methyl-2-oxobutanoate: step 2/4. In terms of biological role, catalyzes the isomerization between 2-isopropylmalate and 3-isopropylmalate, via the formation of 2-isopropylmaleate. This is 3-isopropylmalate dehydratase small subunit from Neisseria meningitidis serogroup A / serotype 4A (strain DSM 15465 / Z2491).